The sequence spans 758 residues: Relaxin receptor 1 (758 aa).

Topologically, residues 1–408 (MTSGPFFFCV…LENLLASIIQ (408 aa)) are extracellular. One can recognise an LDL-receptor class A domain in the interval 26 to 63 (SCPLGSFPCGNISKCLPQLLHCNGVDDCGNQADEDNCG). Intrachain disulfides connect Cys27/Cys40, Cys34/Cys53, and Cys47/Cys62. Asn36 carries an N-linked (GlcNAc...) asparagine glycan. Leu45, Asn48, Val50, Asp52, Asp58, and Glu59 together coordinate Ca(2+). 11 LRR repeats span residues 105-125 (LCRD…PSVS), 126-148 (SNVT…SFRK), 149-172 (YHDL…AFRG), 173-196 (LHSL…VFED), 198-220 (HRLE…TFYG), 221-244 (LNSL…PLCQ), 246-269 (MPRL…TFIS), 270-293 (CNNL…AFTH), 294-317 (LQKL…IFKD), 319-341 (KELS…QFDY), and 342-365 (LAKL…MFRP). Asn127 carries an N-linked (GlcNAc...) asparagine glycan. N-linked (GlcNAc...) asparagine glycans are attached at residues Asn264 and Asn272. N-linked (GlcNAc...) asparagine glycosylation occurs at Asn325. N-linked (GlcNAc...) asparagine glycosylation is present at Asn368. A helical membrane pass occupies residues 409–429 (RVFVWVVSAITCFGNIFVICM). At 430–443 (RPYIRSENKLHAMS) the chain is on the cytoplasmic side. A helical transmembrane segment spans residues 444–464 (IMSLCCADCLMGVYLFVIGAF). Residues 465-486 (DLKFRGEYRKHAQPWMESVHCQ) lie on the Extracellular side of the membrane. Cys485 and Cys563 form a disulfide bridge. Residues 487-507 (FMGSLAVLSTEVSVLLLTFLT) form a helical membrane-spanning segment. The Cytoplasmic portion of the chain corresponds to 508 to 527 (LEKYICIVYPFRCLRPRKCR). A helical membrane pass occupies residues 528 to 548 (TVAVLIFIWITGFIVAFAPLG). Residues 549-577 (NKEFFKNYYGTNGVCFPLHSEDTGSTGAQ) are Extracellular-facing. The chain crosses the membrane as a helical span at residues 578 to 598 (IYSVVIFLGINLVAFIIIVFS). Topologically, residues 599–629 (YGSMFYSVHQSTITATEIQKQVKKEMILAKR) are cytoplasmic. Residues 630-650 (FFFIVFTDALCWIPIFILKFL) form a helical membrane-spanning segment. The Extracellular portion of the chain corresponds to 651–660 (SLIRVEIPDT). Residues 661 to 681 (ITSWVVIFILPINSALNPIIY) form a helical membrane-spanning segment. The Cytoplasmic segment spans residues 682–758 (TLTTRPFKEM…SRSSRLNSYS (77 aa)).

The protein belongs to the G-protein coupled receptor 1 family. In terms of assembly, interacts with C1QTNF8. In terms of tissue distribution, detected in brain cortex, and at low levels in testis.

It localises to the cell membrane. Receptor for relaxins. The activity of this receptor is mediated by G proteins leading to stimulation of adenylate cyclase and an increase of cAMP. Binding of the ligand may also activate a tyrosine kinase pathway that inhibits the activity of a phosphodiesterase that degrades cAMP. The chain is Relaxin receptor 1 (Rxfp1) from Rattus norvegicus (Rat).